The sequence spans 310 residues: 4-hydroxy-3-methylbut-2-enyl diphosphate reductase (310 aa).

Cys13 provides a ligand contact to [4Fe-4S] cluster. (2E)-4-hydroxy-3-methylbut-2-enyl diphosphate-binding residues include His42 and His75. Dimethylallyl diphosphate is bound by residues His42 and His75. Isopentenyl diphosphate-binding residues include His42 and His75. Cys97 lines the [4Fe-4S] cluster pocket. His125 contacts (2E)-4-hydroxy-3-methylbut-2-enyl diphosphate. A dimethylallyl diphosphate-binding site is contributed by His125. His125 contributes to the isopentenyl diphosphate binding site. The active-site Proton donor is Glu127. Position 165 (Thr165) interacts with (2E)-4-hydroxy-3-methylbut-2-enyl diphosphate. Cys195 lines the [4Fe-4S] cluster pocket. Positions 223, 224, 225, and 267 each coordinate (2E)-4-hydroxy-3-methylbut-2-enyl diphosphate. Positions 223, 224, 225, and 267 each coordinate dimethylallyl diphosphate. Isopentenyl diphosphate-binding residues include Ser223, Ser224, Asn225, and Ser267.

This sequence belongs to the IspH family. Requires [4Fe-4S] cluster as cofactor.

The catalysed reaction is isopentenyl diphosphate + 2 oxidized [2Fe-2S]-[ferredoxin] + H2O = (2E)-4-hydroxy-3-methylbut-2-enyl diphosphate + 2 reduced [2Fe-2S]-[ferredoxin] + 2 H(+). The enzyme catalyses dimethylallyl diphosphate + 2 oxidized [2Fe-2S]-[ferredoxin] + H2O = (2E)-4-hydroxy-3-methylbut-2-enyl diphosphate + 2 reduced [2Fe-2S]-[ferredoxin] + 2 H(+). It participates in isoprenoid biosynthesis; dimethylallyl diphosphate biosynthesis; dimethylallyl diphosphate from (2E)-4-hydroxy-3-methylbutenyl diphosphate: step 1/1. The protein operates within isoprenoid biosynthesis; isopentenyl diphosphate biosynthesis via DXP pathway; isopentenyl diphosphate from 1-deoxy-D-xylulose 5-phosphate: step 6/6. In terms of biological role, catalyzes the conversion of 1-hydroxy-2-methyl-2-(E)-butenyl 4-diphosphate (HMBPP) into a mixture of isopentenyl diphosphate (IPP) and dimethylallyl diphosphate (DMAPP). Acts in the terminal step of the DOXP/MEP pathway for isoprenoid precursor biosynthesis. The polypeptide is 4-hydroxy-3-methylbut-2-enyl diphosphate reductase (Chlamydia pneumoniae (Chlamydophila pneumoniae)).